A 498-amino-acid chain; its full sequence is GTPase Der (498 aa).

EngA-type G domains are found at residues 3–167 (PVVA…FDDL) and 210–383 (IKLA…KSAT). Residues 9–16 (GRPNVGKS), 57–61 (DTGGI), 119–122 (NKID), 216–223 (GRPNVGKS), 263–267 (DTAGV), and 328–331 (NKWD) each bind GTP. Residues 384–468 (TRVGTSVLTR…PIRINFQNSE (85 aa)) form the KH-like domain.

Belongs to the TRAFAC class TrmE-Era-EngA-EngB-Septin-like GTPase superfamily. EngA (Der) GTPase family. In terms of assembly, associates with the 50S ribosomal subunit.

GTPase that plays an essential role in the late steps of ribosome biogenesis. The protein is GTPase Der of Vibrio parahaemolyticus serotype O3:K6 (strain RIMD 2210633).